The chain runs to 181 residues: Oligoribonuclease (181 aa).

Positions 8-171 (LIWVDLEMTG…DDIRESIAEL (164 aa)) constitute an Exonuclease domain. Tyr-129 is a catalytic residue.

It belongs to the oligoribonuclease family.

The protein resides in the cytoplasm. Functionally, 3'-to-5' exoribonuclease specific for small oligoribonucleotides. The sequence is that of Oligoribonuclease from Vibrio parahaemolyticus serotype O3:K6 (strain RIMD 2210633).